The chain runs to 75 residues: Protein SlyX homolog (75 aa).

It belongs to the SlyX family.

The polypeptide is Protein SlyX homolog (Vibrio vulnificus (strain CMCP6)).